Here is a 193-residue protein sequence, read N- to C-terminus: Bradykinin-potentiating and C-type natriuretic peptides (193 aa).

A signal peptide spans 1–23 (MFVSRLAASGLLLLALLALSLDG). A propeptide spanning residues 24–27 (KPVH) is cleaved from the precursor. The disordered stretch occupies residues 25–173 (PVHQSKPGRS…RMKGLAKKAM (149 aa)). Q28 bears the Pyrrolidone carboxylic acid mark. 2 propeptides span residues 40–43 (LSAQ) and 58–64 (LSVQQWS). Residue Q65 is modified to Pyrrolidone carboxylic acid. Positions 75–169 (VVVQPHESPA…GGARRMKGLA (95 aa)) are excised as a propeptide. Residues 95–123 (SPGPEAASGPAAPHRLPKSKGASATSAAS) are compositionally biased toward low complexity. Residues 125-150 (PMRDLRTDGKQERQKWGRMVQPDHHA) are compositionally biased toward basic and acidic residues. The span at 152 to 162 (PGGGGGGGGGA) shows a compositional bias: gly residues. Over residues 163-173 (RRMKGLAKKAM) the composition is skewed to basic residues. C177 and C193 form a disulfide bridge.

The protein in the N-terminal section; belongs to the bradykinin-potentiating peptide family. This sequence in the C-terminal section; belongs to the natriuretic peptide family. In terms of tissue distribution, expressed by the venom gland.

The protein localises to the secreted. Its function is as follows. Bradykinin-potentiating peptide both inhibits the activity of the angiotensin-converting enzyme (ACE) and enhances the action of bradykinin by inhibiting the peptidases that inactivate it. It acts as an indirect hypotensive agent. Neither synthetic Tf1, nor synthetic Tf2 show bradykinin-potentiating effects. Functionally, has a vasorelaxant activity in rat aortic strips and a diuretic potency in anesthetized rats. Has a vasorelaxant activity in rat aortic strips and a diuretic potency in anesthetized rats. Is as potent as Tf-CNP. The polypeptide is Bradykinin-potentiating and C-type natriuretic peptides (Protobothrops flavoviridis (Habu)).